The chain runs to 508 residues: Arabinose import ATP-binding protein AraG (508 aa).

ABC transporter domains are found at residues 5–240 (LEFQ…MVGR) and 250–496 (ARTL…LPDA). 37 to 44 (GENGAGKS) provides a ligand contact to ATP.

This sequence belongs to the ABC transporter superfamily. Arabinose importer (TC 3.A.1.2.2) family. As to quaternary structure, the complex is composed of two ATP-binding proteins (AraG), two transmembrane proteins (AraH) and a solute-binding protein (AraF).

It is found in the cell inner membrane. The enzyme catalyses L-arabinose(out) + ATP + H2O = L-arabinose(in) + ADP + phosphate + H(+). Functionally, part of the ABC transporter complex AraFGH involved in arabinose import. Responsible for energy coupling to the transport system. The chain is Arabinose import ATP-binding protein AraG from Rhizobium meliloti (strain 1021) (Ensifer meliloti).